The primary structure comprises 327 residues: Movement protein (327 aa).

Positions 297–327 form a coiled coil; that stretch reads IASSSSTENELARVSQNIDLLKNKLKEICGE.

It belongs to the caulimoviridae movement protein family. In terms of assembly, homotrimer, through the coiled-coil domain. Interacts with VAP. May interact (via N-terminus) with host prenylated Rab acceptor protein 1D (PRA1D).

Its subcellular location is the host cell junction. The protein resides in the host plasmodesma. Transports viral genome to neighboring plant cells directly through plasmosdesmata, without any budding. The movement protein allows efficient cell to cell propagation, by bypassing the host cell wall barrier. Acts by forming tubules structures that increase the size exclusion limit (SEL) of plasmodesmata, thereby allowing viral ribonucleocapsids to spread directly to neighboring cells. The protein is Movement protein of Cauliflower mosaic virus (strain D/H) (CaMV).